A 428-amino-acid chain; its full sequence is 3-phosphoshikimate 1-carboxyvinyltransferase (428 aa).

3-phosphoshikimate is bound by residues Lys22, Ser23, and Arg27. Phosphoenolpyruvate is bound at residue Lys22. Residues Gly94 and Arg122 each contribute to the phosphoenolpyruvate site. The 3-phosphoshikimate site is built by Ser167, Gln169, Asp314, and Lys341. Gln169 is a binding site for phosphoenolpyruvate. Asp314 functions as the Proton acceptor in the catalytic mechanism. Arg345 and Arg387 together coordinate phosphoenolpyruvate.

This sequence belongs to the EPSP synthase family. As to quaternary structure, monomer.

It localises to the cytoplasm. It catalyses the reaction 3-phosphoshikimate + phosphoenolpyruvate = 5-O-(1-carboxyvinyl)-3-phosphoshikimate + phosphate. Its pathway is metabolic intermediate biosynthesis; chorismate biosynthesis; chorismate from D-erythrose 4-phosphate and phosphoenolpyruvate: step 6/7. Its function is as follows. Catalyzes the transfer of the enolpyruvyl moiety of phosphoenolpyruvate (PEP) to the 5-hydroxyl of shikimate-3-phosphate (S3P) to produce enolpyruvyl shikimate-3-phosphate and inorganic phosphate. The chain is 3-phosphoshikimate 1-carboxyvinyltransferase from Geotalea uraniireducens (strain Rf4) (Geobacter uraniireducens).